The following is a 596-amino-acid chain: Fc receptor-like protein 5 (596 aa).

The signal sequence occupies residues 1–26 (MSGSFSPCVVFTQMWLTLLVVTPVNG). The Extracellular segment spans residues 27–496 (QHEAAQQSVV…MTKNRSVPMA (470 aa)). Ig-like C2-type domains follow at residues 34–115 (SVVS…VEFS), 106–199 (PSMH…NTVV), 207–294 (PRPV…TAFI), 296–384 (PVQR…SFVS), and 398–483 (PVLT…IRIS). Cystine bridges form between cysteine 55/cysteine 99, cysteine 137/cysteine 181, and cysteine 228/cysteine 277. Residue asparagine 324 is glycosylated (N-linked (GlcNAc...) asparagine). Cystine bridges form between cysteine 325-cysteine 373 and cysteine 419-cysteine 466. A glycan (N-linked (GlcNAc...) asparagine) is linked at asparagine 436. The helical transmembrane segment at 497 to 517 (AGITVGLLIMAVGVFLFYCWF) threads the bilayer. Over 518-596 (SRKAGGKPTS…RSRCQMAEKK (79 aa)) the chain is Cytoplasmic. 2 disordered regions span residues 522–544 (GGKPTSDDSRNPSDSEPQEPTYY) and 561–596 (EENVIYTEVRRTQPRQKHADQESESPRSRCQMAEKK). A compositionally biased stretch (basic and acidic residues) spans 577–596 (KHADQESESPRSRCQMAEKK).

Interacts with CR2. Interacts with CD19. In terms of processing, phosphorylated on cytoplasmic tyrosines; required for interaction with protein tyrosine phosphatases and protein tyrosine kinases. In terms of tissue distribution, preferentially expressed in marginal zone B cells.

The protein resides in the cell membrane. Its function is as follows. Plays an important role in B-cell response to antigen that acts both as a negative or positive coreceptor. Inhibits B-cell receptor (BCR) signaling in the absence of CR2 stimulation but engagement with CR2 and the BCR lead to a superior calcium response compared to CR2 and BCR costimulation. May be involved in B-cell development and differentiation in peripheral lymphoid organs and may be useful markers of B-cell stages. May have an immunoregulatory role in marginal zone B-cells. May play a role in fertilization. The sequence is that of Fc receptor-like protein 5 (Fcrl5) from Mus musculus (Mouse).